The chain runs to 535 residues: MTPVREIGTWDVLFFLVFLWLLSKLVGRLGRRGRTTPLRGPANKSLFFGLTRYLNESDDPGAIYESWAAEYGPAFRVPSVLGSHRIMICDAKAIAHFYSKETFGYVQTPMTRISIKNIVGRGLLWSEGESHKRQRKALSPAFSNAAIRRLTSVFFDSSYKMKAAWDSILETNPDNSVIDVQKWMNHISLDSIGIAGFSHDFGSLDGKHSDVAAVFDSFGSTKPSYFAIVVFLLAQIFPILLNLPTNRILLINKLKKTMGDIADELLERTRKEKEGETGAVEEKSIIGLLIKAESAEAELRMSQDEVLAQMNVLILAGYETTSISLTWALIELSKRPEKQAKLREELLSQFTSTDPTWEQLTNGLPYLDSVVHEVLRLHPPIGELFRMAAEDDMMPLSTPLVTLSGQTVSSIAIGKGTVVGVPIRCMNRSEVLWGKDAKEFRPERWLEPGFGENNEVQGHRHLLTFVDGPRMCLGKGFALTEFKAALSVLIRNYTFEFPGPGGAVPKIEKHRSILPRPKVEGQDGAKVPLRVRRVE.

The next 2 helical transmembrane spans lie at 7–27 and 225–245; these read IGTWDVLFFLVFLWLLSKLVG and YFAIVVFLLAQIFPILLNLPT. Position 472 (C472) interacts with heme.

This sequence belongs to the cytochrome P450 family. The cofactor is heme.

It localises to the membrane. It functions in the pathway secondary metabolite biosynthesis; terpenoid biosynthesis. Its function is as follows. Cytochrome P450 monooxygenase; part of the gene cluster that mediates the biosynthesis of clavilactone A, a meroterpenoid that features a unique benzo-fused ten-membered carbocyclic ring unit with an alpha,beta-epoxy-gamma-lactone moiety, forming an intriguing 10/5/3 tricyclic nested skeleton. Cytochrome P450 monooxygenases claO, claP, claQ, claU, and claW are close orthologs, suggesting that a redundant function or pseudogenes are present in the cla cluster. These monoxygenases are not involved in clavilactone A biosynthesis nor its modification. ClaR, ClaS and ClaT are sufficient to produce clavilactone A. The biosynthesis begins with the prenyltransferase claS that transfers geranyl pyrophosphate (GPP) to hydroquinone to produces geranylhydroquinone. The cytochrome P450 monooxygenase claR then catalyzes the diradical coupling reaction between the intramolecular hydroquinone and allyl moieties to form the benzo-fused ten-membered carbocyclic ring unit of wigantol. Finally the cytochrome P450 monooxygenase claT exquisitely and stereoselectively assembles the alpha,beta-epoxy-gamma-lactone moiety, producing clavilactone A via arnebinol A. The polypeptide is Cytochrome P450 monooxygenase claQ (Ampulloclitocybe clavipes (Club foot)).